Reading from the N-terminus, the 365-residue chain is Dehydroprecondylocarpine acetate synthase (365 aa).

The Zn(2+) site is built by cysteine 105, cysteine 108, cysteine 111, and cysteine 119. N-linked (GlcNAc...) asparagine glycans are attached at residues asparagine 142 and asparagine 147. NADP(+) is bound by residues leucine 194, glycine 196, leucine 197, serine 216, threonine 217, threonine 218, lysine 221, leucine 279, alanine 281, serine 303, alanine 305, and arginine 350.

The protein belongs to the zinc-containing alcohol dehydrogenase family. In terms of assembly, homodimer. Interaction with catharanthine synthase (CS) and tabersonine synthase (TS). Zn(2+) is required as a cofactor.

The protein localises to the cytoplasm. The protein resides in the cytosol. The enzyme catalyses dihydroprecondylocarpine acetate + NADP(+) = precondylocarpine acetate + NADPH + H(+). The protein operates within alkaloid biosynthesis. Functionally, component of the seco-iridoid and derivatives monoterpenoid indole alkaloids (MIAs, e.g. vinblastine, catharanthine, tabersonine, vincadifformine, vindoline, vincristine, quinine and strychnine) biosynthesis pathway. Catalyzes the non-canonical 1,4-reduction of an alpha,beta-unsaturated iminium moiety; by contrast with the classic alcohol dehydrogenase mechanism, this reaction does not require a catalytic zinc or proton relay. Converts precondylocarpine acetate to dihydroprecondylocarpine acetate, that is spontaneously converted into dehydrosecodine intermediate, precursor of angryline. May also trigger the non-stereoselective 1,4-reduction reaction at C15 of dehydrosecodine leading to the production of secodine, a precursor of vincadifformine. The protein is Dehydroprecondylocarpine acetate synthase of Catharanthus roseus (Madagascar periwinkle).